We begin with the raw amino-acid sequence, 847 residues long: MDIRNEFLQFFKNKGHEIYPSMPLVPNDSTLLFTNAGMVQFKDIFTGMVPHPSIPRATSSQLCMRAGGKHNDLENVGYTARHHTLFEMLGNFSFGDYFKEEAILFAWEFVTKNLGFKPKDLYISVHEKDDEAFKLWEKFVPTDKIKKMGDKDNFWQMGDSGPCGPCSEIYIDQGEKHFKGSEDYFGGEGDRFLEIWNLVFMQYERSNDGILSPLPKPSIDTGMGLERVQALLEHKLNNFDSSLFVPLMKEISELTSLDYASEFQPSFRVVADHARAVAFLLAQGVHFNKEGRGYVLRRILRRSLRHGYLMGLKEAFLYRVVGVVCEQFADTHAYLKESKEMVMKECFEEEKRFLETLESGMELFNLSLKHLNDNKIFDGKIAFKLYDTFGFPLDLTNDMLRNHGACVDMQGFESCMQEQVKRSKASWKGKRNNADFSTILNAYAPNVFVGYETTECFSQALGFFDSDFKEMTETNPNQEVWVLLEKTPFYAEGGGAIGDRGALLKDDEEAALVLDTKNFFGLNFSLLKIKKALKKGDQVIAQVSNERLEIAKHHSATHLLQSALREVLGSHVSQAGSLVESKRLRFDFSHSKALNDEELEKVEDLVNAQIFKHLSSQVEHMPLNQAKDKGALALFSEKYAENVRVVSFKEASIELCGGIHVENTGLIGGFRILKESGVSSGVRRIEAVCGKAFYQLAKEENKELKNARILLKNNDLIAGINKLKESVKNSQKASVPMDLPIETINGTSVVVGVVEQGDIKEMIDRLKNKHEKLLAMVFKQENERISLACGVKNAPIKAHVWANEVAQILGGKGGGRDDFASAGGKDIEKLQAALNAAKNTALKALEK.

Zn(2+) is bound by residues His-554, His-558, Cys-656, and His-660.

It belongs to the class-II aminoacyl-tRNA synthetase family. The cofactor is Zn(2+).

The protein resides in the cytoplasm. It carries out the reaction tRNA(Ala) + L-alanine + ATP = L-alanyl-tRNA(Ala) + AMP + diphosphate. In terms of biological role, catalyzes the attachment of alanine to tRNA(Ala) in a two-step reaction: alanine is first activated by ATP to form Ala-AMP and then transferred to the acceptor end of tRNA(Ala). Also edits incorrectly charged Ser-tRNA(Ala) and Gly-tRNA(Ala) via its editing domain. The polypeptide is Alanine--tRNA ligase (Helicobacter acinonychis (strain Sheeba)).